Consider the following 188-residue polypeptide: Selenoprotein S B (188 aa).

The chain crosses the membrane as a helical span at residues 29-49 (EALSNYGWYILLGCIVIYFLI). Residues 116–125 (TWDRMQEGKS) are compositionally biased toward basic and acidic residues. The segment at 116-188 (TWDRMQEGKS…RGPSSGGSUG (73 aa)) is disordered. Residues 136 to 147 (ASPRTSTSSSAP) show a composition bias toward low complexity. Sec-187 is a non-standard amino acid (selenocysteine).

The protein belongs to the selenoprotein S family.

Its subcellular location is the endoplasmic reticulum membrane. It localises to the cytoplasm. In terms of biological role, involved in the degradation process of misfolded endoplasmic reticulum (ER) luminal proteins. Participates in the transfer of misfolded proteins from the ER to the cytosol, where they are destroyed by the proteasome in a ubiquitin-dependent manner. This is Selenoprotein S B (vimp-b) from Xenopus laevis (African clawed frog).